We begin with the raw amino-acid sequence, 470 residues long: Argininosuccinate lyase (470 aa).

Belongs to the lyase 1 family. Argininosuccinate lyase subfamily.

Its subcellular location is the cytoplasm. It catalyses the reaction 2-(N(omega)-L-arginino)succinate = fumarate + L-arginine. Its pathway is amino-acid biosynthesis; L-arginine biosynthesis; L-arginine from L-ornithine and carbamoyl phosphate: step 3/3. This is Argininosuccinate lyase from Mycobacterium tuberculosis (strain ATCC 25618 / H37Rv).